The following is a 140-amino-acid chain: Neuropeptide CCHamide-2 (140 aa).

The signal sequence occupies residues 1–22 (MAQMYLAVTIIALLAISHGVSA). An intrachain disulfide couples C26 to C33. H37 is modified (histidine amide). Positions 41–140 (SGDTSAMDQL…PDDGYYIESL (100 aa)) are excised as a propeptide.

As to expression, expressed in corpora cardiaca (CC), corpora allata (CA), antennal lobe (AL) and gnathal ganglion (GNG) (at protein level). Expression detected in few animals (at protein level).

It is found in the secreted. Its function is as follows. Ligand for the CCHamide-2 receptor CCHa2-R. This Agrotis ipsilon (Black cutworm moth) protein is Neuropeptide CCHamide-2.